The primary structure comprises 428 residues: 3-phosphoshikimate 1-carboxyvinyltransferase (428 aa).

Lys-20, Ser-21, and Arg-25 together coordinate 3-phosphoshikimate. Position 20 (Lys-20) interacts with phosphoenolpyruvate. Positions 92 and 120 each coordinate phosphoenolpyruvate. 3-phosphoshikimate is bound by residues Ser-166, Gln-168, Asp-314, and Lys-341. Gln-168 is a binding site for phosphoenolpyruvate. The active-site Proton acceptor is the Asp-314. 2 residues coordinate phosphoenolpyruvate: Arg-345 and Arg-387.

Belongs to the EPSP synthase family. As to quaternary structure, monomer.

Its subcellular location is the cytoplasm. The enzyme catalyses 3-phosphoshikimate + phosphoenolpyruvate = 5-O-(1-carboxyvinyl)-3-phosphoshikimate + phosphate. Its pathway is metabolic intermediate biosynthesis; chorismate biosynthesis; chorismate from D-erythrose 4-phosphate and phosphoenolpyruvate: step 6/7. Functionally, catalyzes the transfer of the enolpyruvyl moiety of phosphoenolpyruvate (PEP) to the 5-hydroxyl of shikimate-3-phosphate (S3P) to produce enolpyruvyl shikimate-3-phosphate and inorganic phosphate. This is 3-phosphoshikimate 1-carboxyvinyltransferase from Listeria welshimeri serovar 6b (strain ATCC 35897 / DSM 20650 / CCUG 15529 / CIP 8149 / NCTC 11857 / SLCC 5334 / V8).